The primary structure comprises 488 residues: Homoserine O-acetyltransferase (488 aa).

An AB hydrolase-1 domain is found at 47-355 (NAILVCHALT…SYGHDAFLLE (309 aa)). Catalysis depends on Ser153, which acts as the Nucleophile. Arg222 provides a ligand contact to substrate. Residues Asp316 and His349 contribute to the active site. Asp350 provides a ligand contact to substrate. CBS domains lie at 376 to 433 (MTEK…CSKL) and 437 to 488 (MTRD…RLIG).

Belongs to the AB hydrolase superfamily. MetX family. Homodimer.

It is found in the cytoplasm. The catalysed reaction is L-homoserine + acetyl-CoA = O-acetyl-L-homoserine + CoA. It participates in amino-acid biosynthesis; L-methionine biosynthesis via de novo pathway; O-acetyl-L-homoserine from L-homoserine: step 1/1. Transfers an acetyl group from acetyl-CoA to L-homoserine, forming acetyl-L-homoserine. The chain is Homoserine O-acetyltransferase from Methanococcoides burtonii (strain DSM 6242 / NBRC 107633 / OCM 468 / ACE-M).